Consider the following 796-residue polypeptide: Toll-like receptor 6 (796 aa).

The N-terminal stretch at 1 to 31 (MTKDKEPIVKSFHFVCLMIIIVGTRIQFSDG) is a signal peptide. Residues 32-586 (NEFAVDKSKR…MSELSCNITL (555 aa)) are Extracellular-facing. LRR repeat units lie at residues 54 to 77 (TKVL…FLSE), 78 to 101 (LTVL…FNQD), 102 to 122 (LEYL…PIVS), 123 to 147 (FRHL…NLSQ), 148 to 168 (LNFL…PIAH), 169 to 196 (LHLS…ILNA), 197 to 219 (KTLH…SVNT), 220 to 250 (LGCL…RGST), 251 to 277 (LLNF…WPKP), 278 to 303 (VEYL…SKTT), 304 to 330 (LKAL…VFSE), 331 to 354 (MNIM…APST), 355 to 378 (FKFL…TLVK), 379 to 404 (LETL…DMPS), 405 to 429 (LEIL…WVES), 430 to 450 (IVVL…CLPP), 451 to 474 (RIKV…KLEA), 475 to 496 (LQEL…SFSS), and 497 to 520 (LSVL…SCQK). An intrachain disulfide couples cysteine 117 to cysteine 139. Asparagine 144 carries N-linked (GlcNAc...) asparagine glycosylation. Asparagine 186 and asparagine 214 each carry an N-linked (GlcNAc...) asparagine glycan. Residues cysteine 235 and cysteine 265 are joined by a disulfide bond. 2 N-linked (GlcNAc...) asparagine glycosylation sites follow: asparagine 253 and asparagine 285. Cysteine 348 and cysteine 373 are oxidised to a cystine. A glycan (N-linked (GlcNAc...) asparagine) is linked at asparagine 359. 2 N-linked (GlcNAc...) asparagine glycosylation sites follow: asparagine 423 and asparagine 434. Cysteine 424 and cysteine 447 are joined by a disulfide. The LRRCT domain occupies 521 to 575 (MRSIKAGDNPFQCTCELREFVKNIDQVSSEVLEGWPDSYKCDYPESYRGSPLKDF). An N-linked (GlcNAc...) asparagine glycan is attached at asparagine 583. A helical membrane pass occupies residues 587-607 (LIVTIGATMLVLAVTVTSLCI). Residues 608-796 (YLDLPWYLRM…LVTENNDVKS (189 aa)) lie on the Cytoplasmic side of the membrane. Positions 640-781 (LQFHAFISYS…LFWANIRAAF (142 aa)) constitute a TIR domain.

It belongs to the Toll-like receptor family. In terms of assembly, homodimer (via cytoplasmic TIR domain). Heterodimer with TLR2 via their respective extracellular domains. Binds MYD88 via their respective TIR domains. Interacts with CD36, following CD36 stimulation by oxLDL or amyloid-beta 42, and forms a heterodimer with TLR4. The trimeric complex is internalized and triggers inflammatory response. LYN kinase activity facilitates TLR4:TLR6 heterodimerization and signal initiation. The heterodimer TLR2:TLR6 interacts with CD14 and CD36 in response to triacylated lipopeptides. Detected in monocytes, CD11c+ immature dendritic cells, plasmacytoid pre-dendritic cells and dermal microvessel endothelial cells.

The protein resides in the cell membrane. The protein localises to the cytoplasmic vesicle. It is found in the phagosome membrane. It localises to the membrane raft. Its subcellular location is the golgi apparatus. Participates in the innate immune response to Gram-positive bacteria and fungi. Specifically recognizes diacylated and, to a lesser extent, triacylated lipopeptides. In response to diacylated lipopeptides, forms the activation cluster TLR2:TLR6:CD14:CD36, this cluster triggers signaling from the cell surface and subsequently is targeted to the Golgi in a lipid-raft dependent pathway. Acts via MYD88 and TRAF6, leading to NF-kappa-B activation, cytokine secretion and the inflammatory response. Recognizes mycoplasmal macrophage-activating lipopeptide-2kD (MALP-2), soluble tuberculosis factor (STF), phenol-soluble modulin (PSM) and B.burgdorferi outer surface protein A lipoprotein (OspA-L) cooperatively with TLR2. In complex with TLR4, promotes sterile inflammation in monocytes/macrophages in response to oxidized low-density lipoprotein (oxLDL) or amyloid-beta 42. In this context, the initial signal is provided by oxLDL- or amyloid-beta 42-binding to CD36. This event induces the formation of a heterodimer of TLR4 and TLR6, which is rapidly internalized and triggers inflammatory response, leading to the NF-kappa-B-dependent production of CXCL1, CXCL2 and CCL9 cytokines, via MYD88 signaling pathway, and CCL5 cytokine, via TICAM1 signaling pathway, as well as IL1B secretion. This is Toll-like receptor 6 (TLR6) from Homo sapiens (Human).